The chain runs to 105 residues: Protein S100-A11 (105 aa).

Met-1 bears the N-acetylmethionine mark. Residue Ala-2 is modified to N-acetylalanine; in Protein S100-A11, N-terminally processed. Lys-3 is subject to N6-acetyllysine. A phosphoserine mark is found at Ser-5 and Ser-6. Residue Thr-10 is modified to Phosphothreonine. EF-hand domains are found at residues 13–49 (CIESLIAVFQKYAGKDGYNYTLSKTEFLSFMNTELAA) and 55–90 (KDPGVLDRMMKKLDTNSDGQLDFSEFLNLIGGLAMA). Residue Lys-27 is modified to N6-acetyllysine. Residues Thr-33, Glu-38, Asp-68, Asn-70, Asp-72, Gln-74, and Glu-79 each coordinate Ca(2+).

This sequence belongs to the S-100 family. Homodimer; disulfide-linked. In terms of processing, phosphorylation at Thr-10 by PRKCA significantly suppresses homodimerization and promotes association with NCL/nucleolin which induces nuclear translocation.

The protein resides in the cytoplasm. Its subcellular location is the nucleus. Facilitates the differentiation and the cornification of keratinocytes. In Homo sapiens (Human), this protein is Protein S100-A11 (S100A11).